A 288-amino-acid polypeptide reads, in one-letter code: MPELPEVEVTRLGLVPHLTGRRIVRAVVRHHGLRWPVDPALPELLGGRTVARVLRRGKYLLIECVPDIAHGPQAGAGWLLVHLGMTGTLRVLETPAAPGTHDHLDIELADAAGRPITLRYRDPRRFGAVLWHDGDEAALSAHPLLRNLGIEPFDTRFDGDWMYARTRGRSAAIKTVLLAGDIVVGVGNIYCSESLFRAGIRPTTAAGRISRPRYAALAEAIRATLADAIARGGSTLRDFVGSDGQSGYFQLDALVYDRAGLPCRVCGTPIRQIVQGQRSTFYCPACQR.

The active-site Schiff-base intermediate with DNA is the P2. E3 serves as the catalytic Proton donor. Residue K58 is the Proton donor; for beta-elimination activity of the active site. H101, R124, and R169 together coordinate DNA. Residues L254–R288 form an FPG-type zinc finger. The Proton donor; for delta-elimination activity role is filled by R278.

It belongs to the FPG family. In terms of assembly, monomer. Zn(2+) serves as cofactor.

It carries out the reaction Hydrolysis of DNA containing ring-opened 7-methylguanine residues, releasing 2,6-diamino-4-hydroxy-5-(N-methyl)formamidopyrimidine.. The catalysed reaction is 2'-deoxyribonucleotide-(2'-deoxyribose 5'-phosphate)-2'-deoxyribonucleotide-DNA = a 3'-end 2'-deoxyribonucleotide-(2,3-dehydro-2,3-deoxyribose 5'-phosphate)-DNA + a 5'-end 5'-phospho-2'-deoxyribonucleoside-DNA + H(+). Involved in base excision repair of DNA damaged by oxidation or by mutagenic agents. Acts as a DNA glycosylase that recognizes and removes damaged bases. Has a preference for oxidized purines, such as 7,8-dihydro-8-oxoguanine (8-oxoG). Has AP (apurinic/apyrimidinic) lyase activity and introduces nicks in the DNA strand. Cleaves the DNA backbone by beta-delta elimination to generate a single-strand break at the site of the removed base with both 3'- and 5'-phosphates. In Ralstonia nicotianae (strain ATCC BAA-1114 / GMI1000) (Ralstonia solanacearum), this protein is Formamidopyrimidine-DNA glycosylase.